The following is a 775-amino-acid chain: Chloride channel protein CLC-a (775 aa).

A disordered region spans residues 1–28 (MDEDGNLQISNSNYNGEEEGEDPENNTL). The next 12 helical transmembrane spans lie at 88 to 108 (TLAC…NLAV), 131 to 151 (GLMV…VLVV), 178 to 198 (FGFT…AAGL), 206 to 226 (LVHI…DNHR), 248 to 268 (GSAS…LFAL), 278 to 298 (ALLW…RAFI), 328 to 348 (AADI…GSLY), 371 to 391 (VLLS…LPFL), 453 to 473 (MVSL…TFGI), 478 to 498 (GLFL…GTAM), 510 to 530 (AVLG…SLCV), and 531 to 551 (IFLE…VLLI). CBS domains are found at residues 595 to 658 (AKPP…FLNE) and 703 to 768 (TNTT…HLDK). Residues 730 to 750 (HLLVVPKIQASGMSPVIGILT) traverse the membrane as a helical segment.

It belongs to the chloride channel (TC 2.A.49) family. Homodimer. Interacts with PP2A5. In terms of tissue distribution, broadly expressed in the plant.

It localises to the membrane. Voltage-gated chloride channel that could play a role in the regulation of nitrate content. This is Chloride channel protein CLC-a (CLC-A) from Arabidopsis thaliana (Mouse-ear cress).